Reading from the N-terminus, the 175-residue chain is MMTGLNTAGADRDLATAELNRELQDKGFLLTTTEDIINWARNGSLHWMTFGLACCAVEMMQTSMPRYDLERFGTAPRASPRQSDLMIVAGTLTNKMAPALRKVYDQMPEPRYVISMGSCANGGGYYHYSYSVVRGCDRIVPVDIYVPGCPPTAEALLYGILQLQRRIRRTGTLVR.

[4Fe-4S] cluster contacts are provided by Cys54, Cys55, Cys119, and Cys149.

This sequence belongs to the complex I 20 kDa subunit family. NDH-1 is composed of at least 14 different subunits, Nqo1 to Nqo14. The complex has a L-shaped structure, with the hydrophobic arm (subunits Nqo7, Nqo8, Nqo10 to Nqo14) embedded in the inner membrane and the hydrophilic peripheral arm (subunits Nqo1 to Nqo6, Nqo9) protruding into the bacterial cytoplasm. The hydrophilic domain contains all the redox centers. NADH-quinone oxidoreductase forms a supercomplex with ubiquinol-cytochrome c reductase complex (complex III or cytochrome b-c1 complex) and cytochrome c oxidase (complex IV), which stabilizes the NADH-quinone oxidoreductase complex. The cofactor is [4Fe-4S] cluster.

The protein resides in the cell inner membrane. The catalysed reaction is a quinone + NADH + 5 H(+)(in) = a quinol + NAD(+) + 4 H(+)(out). NDH-1 shuttles electrons from NADH, via FMN and iron-sulfur (Fe-S) centers, to quinones in the respiratory chain. The immediate electron acceptor for the enzyme in this species is believed to be ubiquinone. Couples the redox reaction to proton translocation (for every two electrons transferred, four hydrogen ions are translocated across the cytoplasmic membrane), and thus conserves the redox energy in a proton gradient. This Paracoccus denitrificans (strain Pd 1222) protein is NADH-quinone oxidoreductase subunit B.